The sequence spans 191 residues: MEVILLERIAKLGQMGETVKVRDGFARNYLLPLGKALRANASNKARFEAERSTLEARNLERKSEAQKVAESLDGKSFIIVRSAGETGQLYGSVAARDIVETLAAEGFNINRNQVDLNQPIKAIGLHTVTLHLHGEVDVAIEINVARSAEEAERQAKGESLTSADAIYGVDEDALKPEDFFNPEAEIESEEE.

A disordered region spans residues 151–191 (AERQAKGESLTSADAIYGVDEDALKPEDFFNPEAEIESEEE).

The protein belongs to the bacterial ribosomal protein bL9 family.

Binds to the 23S rRNA. This is Large ribosomal subunit protein bL9 from Sinorhizobium medicae (strain WSM419) (Ensifer medicae).